The chain runs to 465 residues: Cysteine--tRNA ligase (465 aa).

Cys-27 contacts Zn(2+). The 'HIGH' region signature appears at 29-39 (PTVYDFIHIGN). Cys-207, His-232, and Glu-236 together coordinate Zn(2+). The 'KMSKS' region motif lies at 264 to 268 (KMSKS). Lys-267 is an ATP binding site.

It belongs to the class-I aminoacyl-tRNA synthetase family. In terms of assembly, monomer. The cofactor is Zn(2+).

It is found in the cytoplasm. It carries out the reaction tRNA(Cys) + L-cysteine + ATP = L-cysteinyl-tRNA(Cys) + AMP + diphosphate. This is Cysteine--tRNA ligase from Caldicellulosiruptor saccharolyticus (strain ATCC 43494 / DSM 8903 / Tp8T 6331).